The following is a 429-amino-acid chain: Bifunctional protein GlmU (429 aa).

Positions 1-223 (MKTSILILAA…EDEFMGINDK (223 aa)) are pyrophosphorylase. UDP-N-acetyl-alpha-D-glucosamine contacts are provided by residues 8 to 11 (LAAG), Lys-22, and 81 to 82 (GT). Residue Asp-102 participates in Mg(2+) binding. Residues Gly-135, Glu-149, Asn-164, and Asn-221 each contribute to the UDP-N-acetyl-alpha-D-glucosamine site. Position 221 (Asn-221) interacts with Mg(2+). The interval 224 to 244 (FELSIAENFMQEKIKKYWMQQ) is linker. Residues 245–429 (GVIFHLPQST…KDYYYKKFQK (185 aa)) are N-acetyltransferase. The UDP-N-acetyl-alpha-D-glucosamine site is built by Arg-308 and Lys-325. The Proton acceptor role is filled by His-336. Positions 339 and 350 each coordinate UDP-N-acetyl-alpha-D-glucosamine. Acetyl-CoA contacts are provided by residues 359–360 (NY), Ser-378, Ala-396, and Arg-413.

The protein in the N-terminal section; belongs to the N-acetylglucosamine-1-phosphate uridyltransferase family. It in the C-terminal section; belongs to the transferase hexapeptide repeat family. As to quaternary structure, homotrimer. Mg(2+) serves as cofactor.

Its subcellular location is the cytoplasm. The enzyme catalyses alpha-D-glucosamine 1-phosphate + acetyl-CoA = N-acetyl-alpha-D-glucosamine 1-phosphate + CoA + H(+). It catalyses the reaction N-acetyl-alpha-D-glucosamine 1-phosphate + UTP + H(+) = UDP-N-acetyl-alpha-D-glucosamine + diphosphate. Its pathway is nucleotide-sugar biosynthesis; UDP-N-acetyl-alpha-D-glucosamine biosynthesis; N-acetyl-alpha-D-glucosamine 1-phosphate from alpha-D-glucosamine 6-phosphate (route II): step 2/2. It participates in nucleotide-sugar biosynthesis; UDP-N-acetyl-alpha-D-glucosamine biosynthesis; UDP-N-acetyl-alpha-D-glucosamine from N-acetyl-alpha-D-glucosamine 1-phosphate: step 1/1. The protein operates within bacterial outer membrane biogenesis; LPS lipid A biosynthesis. In terms of biological role, catalyzes the last two sequential reactions in the de novo biosynthetic pathway for UDP-N-acetylglucosamine (UDP-GlcNAc). The C-terminal domain catalyzes the transfer of acetyl group from acetyl coenzyme A to glucosamine-1-phosphate (GlcN-1-P) to produce N-acetylglucosamine-1-phosphate (GlcNAc-1-P), which is converted into UDP-GlcNAc by the transfer of uridine 5-monophosphate (from uridine 5-triphosphate), a reaction catalyzed by the N-terminal domain. This Campylobacter jejuni subsp. jejuni serotype O:6 (strain 81116 / NCTC 11828) protein is Bifunctional protein GlmU.